Here is a 246-residue protein sequence, read N- to C-terminus: Acetoacetate decarboxylase (246 aa).

Lysine 116 serves as the catalytic Schiff-base intermediate with acetoacetate.

It belongs to the ADC family.

It carries out the reaction acetoacetate + H(+) = acetone + CO2. Functionally, catalyzes the conversion of acetoacetate to acetone and carbon dioxide. This chain is Acetoacetate decarboxylase, found in Bordetella avium (strain 197N).